We begin with the raw amino-acid sequence, 1488 residues long: Chromosome partition protein MukB (1488 aa).

34–41 provides a ligand contact to ATP; sequence GGNGAGKS. Coiled-coil stretches lie at residues 326–418, 444–472, and 509–602; these read LEAD…QYNQ, LDTF…QTAH, and RHLA…RRAP. The flexible hinge stretch occupies residues 666-783; sequence PGGAEDQRLN…SLPIFGRAAR (118 aa). Coiled-coil stretches lie at residues 835–923, 977–1116, and 1209–1265; these read EAEI…AKLE, EMLS…AKAG, and VEAI…LQSV. Residues 1049–1074 form a disordered region; it reads ADSGAEERARQRRDELHAQLSNNRSR. Over residues 1051-1065 the composition is skewed to basic and acidic residues; the sequence is SGAEERARQRRDELH.

It belongs to the SMC family. MukB subfamily. As to quaternary structure, homodimerization via its hinge domain. Binds to DNA via its C-terminal region. Interacts, and probably forms a ternary complex, with MukE and MukF via its C-terminal region. The complex formation is stimulated by calcium or magnesium. Interacts with tubulin-related protein FtsZ.

The protein localises to the cytoplasm. The protein resides in the nucleoid. Plays a central role in chromosome condensation, segregation and cell cycle progression. Functions as a homodimer, which is essential for chromosome partition. Involved in negative DNA supercoiling in vivo, and by this means organize and compact chromosomes. May achieve or facilitate chromosome segregation by condensation DNA from both sides of a centrally located replisome during cell division. This Salmonella heidelberg (strain SL476) protein is Chromosome partition protein MukB.